The sequence spans 772 residues: Ribosomal protein S6 kinase alpha-4 (772 aa).

The region spanning 33-301 is the Protein kinase 1 domain; the sequence is FELLKVLGTG…AQEVRNHPFF (269 aa). ATP is bound by residues 39–47 and Lys65; that span reads LGTGAYGKV. The active-site Proton acceptor is Asp161. Phosphoserine; by autocatalysis is present on Ser196. The region spanning 302–371 is the AGC-kinase C-terminal domain; that stretch reads QGLDWVALAA…VAPSILFDHN (70 aa). Ser343 is modified (phosphoserine; by MAPK1, MAPK3 and MAPK14). Residue Ser347 is modified to Phosphoserine. A phosphoserine; by autocatalysis mark is found at Ser360 and Ser365. One can recognise a Protein kinase 2 domain in the interval 411 to 674; it reads DLREPALGQG…LEGLRGSSWL (264 aa). Residues 417–425 and Lys440 contribute to the ATP site; that span reads LGQGSFSVC. Asp530 serves as the catalytic Proton acceptor. The residue at position 542 (Thr542) is a Phosphothreonine. Thr568 is modified (phosphothreonine; by MAPK1, MAPK3 and MAPK14). 2 positions are modified to phosphoserine: Ser634 and Ser678. Disordered stretches follow at residues 673-696 and 728-772; these read WLQD…SSGP and AKRR…LPPS. Thr687 is subject to Phosphothreonine. Residues 725-772 form a required for nuclear targeting and association with MAPK14 region; the sequence is APLAKRRKQKLRSATASRRGSPAPANPGRAPVASKGAPRRANGPLPPS. Ser737 carries the phosphoserine; by autocatalysis modification. Phosphoserine is present on Ser745.

This sequence belongs to the protein kinase superfamily. AGC Ser/Thr protein kinase family. S6 kinase subfamily. As to quaternary structure, forms a complex with either MAPK1/ERK2 or MAPK3/ERK1 in quiescent cells which transiently dissociates following mitogenic stimulation. Also associates with MAPK14/p38-alpha. Activated RPS6KA4 associates with and phosphorylates the NF-kappa-B p65 subunit RELA. Mg(2+) serves as cofactor. Post-translationally, ser-343 and Thr-568 phosphorylation is required for kinase activity. Ser-343 and Ser-196 are autophosphorylated by the C-terminal kinase domain, and their phosphorylation is essential for the catalytic activity of the N-terminal kinase domain. Phosphorylated at Ser-343, Thr-568 and Thr-687 by MAPK1/ERK2, MAPK3/ERK1 and MAPK14/p38-alpha. Autophosphorylated at Ser-737 and Ser-745 by the N-terminal kinase domain.

It localises to the nucleus. It catalyses the reaction L-seryl-[protein] + ATP = O-phospho-L-seryl-[protein] + ADP + H(+). The enzyme catalyses L-threonyl-[protein] + ATP = O-phospho-L-threonyl-[protein] + ADP + H(+). Its activity is regulated as follows. Activated by phosphorylation at Ser-343, Thr-568 and Thr-687 by MAPK1/ERK2, MAPK3/ERK1 and MAPK14/p38-alpha, and by further autophosphorylation of Ser-196, Ser-360 and Ser-365 by the activated C-terminal kinase domain. Serine/threonine-protein kinase that is required for the mitogen or stress-induced phosphorylation of the transcription factors CREB1 and ATF1 and for the regulation of the transcription factor RELA, and that contributes to gene activation by histone phosphorylation and functions in the regulation of inflammatory genes. Phosphorylates CREB1 and ATF1 in response to mitogenic or stress stimuli such as UV-C irradiation, epidermal growth factor (EGF) and anisomycin. Plays an essential role in the control of RELA transcriptional activity in response to TNF. Phosphorylates 'Ser-10' of histone H3 in response to mitogenics, stress stimuli and EGF, which results in the transcriptional activation of several immediate early genes, including proto-oncogenes c-fos/FOS and c-jun/JUN. May also phosphorylate 'Ser-28' of histone H3. Mediates the mitogen- and stress-induced phosphorylation of high mobility group protein 1 (HMGN1/HMG14). In lipopolysaccharide-stimulated primary macrophages, acts downstream of the Toll-like receptor TLR4 to limit the production of pro-inflammatory cytokines. Functions probably by inducing transcription of the MAP kinase phosphatase DUSP1 and the anti-inflammatory cytokine interleukin 10 (IL10), via CREB1 and ATF1 transcription factors. This is Ribosomal protein S6 kinase alpha-4 (RPS6KA4) from Homo sapiens (Human).